The sequence spans 470 residues: 6-phospho-beta-galactosidase (470 aa).

D-galactose 6-phosphate-binding residues include glutamine 19, histidine 116, asparagine 159, glutamate 160, and asparagine 297. The active-site Proton donor is the glutamate 160. The Nucleophile role is filled by glutamate 375. D-galactose 6-phosphate-binding residues include serine 430, tryptophan 431, lysine 437, and tyrosine 439.

It belongs to the glycosyl hydrolase 1 family.

The enzyme catalyses a 6-phospho-beta-D-galactoside + H2O = D-galactose 6-phosphate + an alcohol. Its pathway is carbohydrate metabolism; lactose degradation; D-galactose 6-phosphate and beta-D-glucose from lactose 6-phosphate: step 1/1. This is 6-phospho-beta-galactosidase from Staphylococcus aureus (strain USA300).